The primary structure comprises 576 residues: ATP-dependent RNA helicase has1 (576 aa).

The disordered stretch occupies residues 1-94 (MGSAQDQTKK…STMGLSLPTD (94 aa)). A compositionally biased stretch (basic and acidic residues) spans 26-37 (RVVEADDQRELT). Over residues 51–66 (PPTDETPDAEDVEQTE) the composition is skewed to acidic residues. Residues 98–126 (QKFDELNLSEPTMKAIRQMGFETMTEIQQ) carry the Q motif motif. The region spanning 129–305 (IPPTLAGRDI…RISLKPGPLY (177 aa)) is the Helicase ATP-binding domain. 142-149 (AKTGSGKT) contributes to the ATP binding site. The short motif at 252 to 255 (DEAD) is the DEAD box element. The Helicase C-terminal domain occupies 319–490 (GVDQGYIICE…DIQSQLEKLI (172 aa)). A disordered region spans residues 555-576 (DKVQARRPYGSQNKSARFKRRA).

Belongs to the DEAD box helicase family. DDX18/HAS1 subfamily. Associates in the nucleolus with the 60S and pre-60S ribosomal subunits.

It is found in the nucleus. The protein localises to the nucleolus. The enzyme catalyses ATP + H2O = ADP + phosphate + H(+). Functionally, ATP-dependent RNA helicase involved in 40S ribosomal subunit biogenesis. Required for the processing and cleavage of 35S pre-rRNA at sites A0, A1, and A2, leading to mature 18S rRNA. The chain is ATP-dependent RNA helicase has1 (has1) from Aspergillus terreus (strain NIH 2624 / FGSC A1156).